A 157-amino-acid polypeptide reads, in one-letter code: uncharacterized protein (157 aa).

The N-acetyltransferase domain maps to 9-154 (LLINYKTLDE…ETNLNAVTNE (146 aa)).

This is an uncharacterized protein from Bacillus cereus (strain B4264).